Consider the following 55-residue polypeptide: MKIFFAVLVILVLFSMLIWTAYGAPYPVNCKTDRDCVMCGLGISCKNGYCQSCTR.

Positions 1-23 (MKIFFAVLVILVLFSMLIWTAYG) are cleaved as a signal peptide. Intrachain disulfides connect Cys-30-Cys-45, Cys-36-Cys-50, and Cys-39-Cys-53.

Expressed by the venom gland.

It localises to the secreted. This Olivierus martensii (Manchurian scorpion) protein is Neurotoxin BmKX-A1-S31.